Here is a 1037-residue protein sequence, read N- to C-terminus: Protein brain tumor (1037 aa).

Disordered stretches follow at residues serine 29–glutamate 63 and serine 159–arginine 178. Composition is skewed to polar residues over residues serine 31–alanine 42 and glycine 54–glutamate 63. Residues serine 159 to serine 175 are compositionally biased toward low complexity. A B box-type 1; atypical zinc finger spans residues glycine 174–isoleucine 222. Zn(2+) is bound by residues cysteine 179, cysteine 182, cysteine 204, histidine 208, cysteine 328, histidine 331, cysteine 351, and histidine 356. The segment at glutamine 323 to valine 366 adopts a B box-type 2 zinc-finger fold. Positions glycine 543 to histidine 554 are enriched in polar residues. The interval glycine 543 to glutamine 606 is disordered. The span at glutamine 565–serine 577 shows a compositional bias: low complexity. Over residues histidine 579–alanine 598 the composition is skewed to basic residues. NHL repeat units lie at residues histidine 767–glutamate 810, lysine 814–tyrosine 859, glycine 860–asparagine 901, glycine 902–glutamate 944, and glycine 945–aspartate 988.

As to quaternary structure, interacts with nanos (nos) and pum. Acts via the formation of a quaternary complex composed of pum, nanos, brat and the 3'-UTR mRNA of hb. Not recruited by nanos and pum to cyclin B 3'-UTR mRNA. Might interact with mira; the interaction seems to be important for brat localization during mitosis. Interacts with Ago1. As to expression, expressed during embryogenesis, mainly in nervous tissues. Expressed in the embryonic central and peripheral nervous systems including the embryonic brain. In third instar larva it is expressed in the larval central nervous system including the brain and the ventral ganglion, in two glands (the ring gland and the salivary gland, and in parts of the foregut) the gastric caeca and the proventriculus.

It localises to the cytoplasm. The protein resides in the cell cortex. In terms of biological role, a NHL-domain family protein that functions as a translational repressor to inhibit cell proliferation. Plays a central role in translation repression of hb mRNA by being recruited by nanos (nos) and pum to the Nanos Response Element (NRE), a 16 bp sequence in the hb mRNA 3'-UTR. Probably recruited by other proteins to repress translation of other mRNAs in other tissues. Negatively regulates expression of Myc in a 3'-UTR dependent manner in both neural progenitor and epithelial cells. Regulates expression of mei-P26, possibly at transcriptional level. Involved in the regulation of ribosomal RNA synthesis and cell growth. Participates in abdominal segmentation and imaginal disk development. During neuroblast division, segregates asymmetrically and inhibits self-renewal of one of the two daughter cells. Together with the asymmetrically segregating transcription factor prospero ensures that the daughter cell will stop growing, exit the cell cycle, and differentiate into neurons possibly by modulating the function of dm in ganglion mother cells (GMC). Restricts developmental potential of type II intermediary neuronal progenitor (INP) cells playing a role in proliferation and maturation of the neuroblasts. This Drosophila melanogaster (Fruit fly) protein is Protein brain tumor.